The following is a 206-amino-acid chain: MLLCDIGNTFLHFYHKGRIWKEKPYALTKKKENLPIYYISVNERFERCLLASHPHCVNVNEHIELQTQYVGLGVDRKAACRAIDNGVIIDAGSAITADVMQEGVHIGGYIMPGLEAYRRMYSDISPVLNREIEPGVNLSILPQNTADAISFGVLKSVILMIKNTSRTKKLYFTGGDGKFFARFFENAIYDNTLVFKGMQKVLEKQI.

5-12 provides a ligand contact to ATP; the sequence is DIGNTFLH. Substrate-binding positions include Tyr-69 and 73–76; that span reads GVDR. Catalysis depends on Asp-75, which acts as the Proton acceptor. A K(+)-binding site is contributed by Asp-90. Ser-93 is a binding site for ATP. Substrate is bound at residue Thr-145.

This sequence belongs to the type III pantothenate kinase family. Homodimer. The cofactor is NH4(+). K(+) is required as a cofactor.

Its subcellular location is the cytoplasm. It carries out the reaction (R)-pantothenate + ATP = (R)-4'-phosphopantothenate + ADP + H(+). Its pathway is cofactor biosynthesis; coenzyme A biosynthesis; CoA from (R)-pantothenate: step 1/5. Its function is as follows. Catalyzes the phosphorylation of pantothenate (Pan), the first step in CoA biosynthesis. This is Type III pantothenate kinase from Helicobacter hepaticus (strain ATCC 51449 / 3B1).